The sequence spans 351 residues: Maleylacetate reductase (351 aa).

This sequence belongs to the iron-containing alcohol dehydrogenase family. As to quaternary structure, homodimer.

The catalysed reaction is 3-oxoadipate + NAD(+) = maleylacetate + NADH + H(+). The protein operates within aromatic compound metabolism. Its function is as follows. Involved in the gamma-resorcylate (2,6-dihydroxybenzoate) catabolism. Catalyzes the reduction of maleylacetate to 3-oxoadipate. In Rhizobium sp. (strain MTP-10005), this protein is Maleylacetate reductase.